A 296-amino-acid polypeptide reads, in one-letter code: MKVLVTALIISFSTAVLTVPVSIITAPLSVETIPGSSLDSTKVLGKLEAAYAQYGADSTSFKNSLQNIINAYMSIAADYEAQAGILEVRADIAEAAKNDVLATELEIKGDALEALAEGYTKTAEMLQEFLKLISEHEHKLSVVFREVKSGMIGTAAMESRLRPQATSSLPATGGQPSTGGKPTTGGQPTTGGQPSTGGQPSTGGQPTTGGQSITGGQPTTGGQPTTGGLPTTGGQPSTGGQPTTGGQPTTGGQPSTGGQPSTGGHQQLGVNQPEETPAPNRQLKMFRHYSKVCWQI.

The N-terminal stretch at 1–18 (MKVLVTALIISFSTAVLT) is a signal peptide. A disordered region spans residues 157 to 280 (MESRLRPQAT…NQPEETPAPN (124 aa)). The span at 172–264 (TGGQPSTGGK…STGGQPSTGG (93 aa)) shows a compositional bias: low complexity.

In terms of tissue distribution, component of the acid-insoluble and acid-soluble organic matrix of calcified layers of the shell (at protein level).

Its subcellular location is the secreted. In Lottia gigantea (Giant owl limpet), this protein is Glycine and tyrosine-rich protein.